A 274-amino-acid chain; its full sequence is Energy-coupling factor transporter ATP-binding protein EcfA1 (274 aa).

Residues 9–240 enclose the ABC transporter domain; the sequence is CSFINVAFSY…EQELQKIRLD (232 aa). 41 to 48 contacts ATP; that stretch reads GHNGSGKS.

This sequence belongs to the ABC transporter superfamily. Energy-coupling factor EcfA family. In terms of assembly, forms a stable energy-coupling factor (ECF) transporter complex composed of 2 membrane-embedded substrate-binding proteins (S component), 2 ATP-binding proteins (A component) and 2 transmembrane proteins (T component).

It is found in the cell membrane. Functionally, ATP-binding (A) component of a common energy-coupling factor (ECF) ABC-transporter complex. Unlike classic ABC transporters this ECF transporter provides the energy necessary to transport a number of different substrates. This Mycoplasma genitalium (strain ATCC 33530 / DSM 19775 / NCTC 10195 / G37) (Mycoplasmoides genitalium) protein is Energy-coupling factor transporter ATP-binding protein EcfA1.